A 179-amino-acid chain; its full sequence is Large ribosomal subunit protein uL6 (179 aa).

The protein belongs to the universal ribosomal protein uL6 family. As to quaternary structure, part of the 50S ribosomal subunit.

Functionally, this protein binds to the 23S rRNA, and is important in its secondary structure. It is located near the subunit interface in the base of the L7/L12 stalk, and near the tRNA binding site of the peptidyltransferase center. This chain is Large ribosomal subunit protein uL6, found in Acidobacterium capsulatum (strain ATCC 51196 / DSM 11244 / BCRC 80197 / JCM 7670 / NBRC 15755 / NCIMB 13165 / 161).